The primary structure comprises 538 residues: Phosphoenolpyruvate carboxykinase (ATP) (538 aa).

Substrate is bound by residues Arg64, Tyr205, and Lys211. ATP is bound by residues Lys211, His230, and 246 to 254; that span reads GLSGTGKTT. Positions 211 and 230 each coordinate Mn(2+). Asp267 contacts Mn(2+). ATP is bound by residues Glu295, Arg331, 447-448, and Thr453; that span reads RI. Arg331 provides a ligand contact to substrate.

The protein belongs to the phosphoenolpyruvate carboxykinase (ATP) family. Monomer. It depends on Mn(2+) as a cofactor.

The protein resides in the cytoplasm. The catalysed reaction is oxaloacetate + ATP = phosphoenolpyruvate + ADP + CO2. The protein operates within carbohydrate biosynthesis; gluconeogenesis. Functionally, involved in the gluconeogenesis. Catalyzes the conversion of oxaloacetate (OAA) to phosphoenolpyruvate (PEP) through direct phosphoryl transfer between the nucleoside triphosphate and OAA. This chain is Phosphoenolpyruvate carboxykinase (ATP), found in Haemophilus influenzae (strain PittEE).